Reading from the N-terminus, the 231-residue chain is Large ribosomal subunit protein uL1 (231 aa).

This sequence belongs to the universal ribosomal protein uL1 family. As to quaternary structure, part of the 50S ribosomal subunit.

Binds directly to 23S rRNA. The L1 stalk is quite mobile in the ribosome, and is involved in E site tRNA release. Its function is as follows. Protein L1 is also a translational repressor protein, it controls the translation of the L11 operon by binding to its mRNA. The chain is Large ribosomal subunit protein uL1 from Gluconacetobacter diazotrophicus (strain ATCC 49037 / DSM 5601 / CCUG 37298 / CIP 103539 / LMG 7603 / PAl5).